The chain runs to 204 residues: Holliday junction branch migration complex subunit RuvA (204 aa).

The tract at residues 1 to 64 (MIGRLQGKLI…EDAHLLFGFS (64 aa)) is domain I. The domain II stretch occupies residues 65 to 143 (TKTDRTLFRE…GLRQPDFFVE (79 aa)). A flexible linker region spans residues 144 to 155 (SKHITVPDIVSA). The interval 156–204 (EKETPNDEAVAALVALGYKPPEAAKMVKKVANGDLTSEQLIREALKAAL) is domain III.

This sequence belongs to the RuvA family. Homotetramer. Forms an RuvA(8)-RuvB(12)-Holliday junction (HJ) complex. HJ DNA is sandwiched between 2 RuvA tetramers; dsDNA enters through RuvA and exits via RuvB. An RuvB hexamer assembles on each DNA strand where it exits the tetramer. Each RuvB hexamer is contacted by two RuvA subunits (via domain III) on 2 adjacent RuvB subunits; this complex drives branch migration. In the full resolvosome a probable DNA-RuvA(4)-RuvB(12)-RuvC(2) complex forms which resolves the HJ.

The protein localises to the cytoplasm. In terms of biological role, the RuvA-RuvB-RuvC complex processes Holliday junction (HJ) DNA during genetic recombination and DNA repair, while the RuvA-RuvB complex plays an important role in the rescue of blocked DNA replication forks via replication fork reversal (RFR). RuvA specifically binds to HJ cruciform DNA, conferring on it an open structure. The RuvB hexamer acts as an ATP-dependent pump, pulling dsDNA into and through the RuvAB complex. HJ branch migration allows RuvC to scan DNA until it finds its consensus sequence, where it cleaves and resolves the cruciform DNA. This Actinobacillus succinogenes (strain ATCC 55618 / DSM 22257 / CCUG 43843 / 130Z) protein is Holliday junction branch migration complex subunit RuvA.